A 436-amino-acid chain; its full sequence is Acetylcholine receptor non-alpha chain (436 aa).

The Extracellular segment spans residues 1–195; the sequence is IIDVHEIDQI…IFYLELRRKP (195 aa). N62 carries an N-linked (GlcNAc...) asparagine glycan. An intrachain disulfide couples C89 to C103. N-linked (GlcNAc...) asparagine glycosylation occurs at N140. A run of 3 helical transmembrane segments spans residues 196 to 219, 227 to 245, and 261 to 280; these read LFYT…AFYL, VTLC…LLLK, and YLLF…VISL. The Cytoplasmic segment spans residues 281 to 404; sequence NLHFRRPSTH…WKFVARVLDR (124 aa). The chain crosses the membrane as a helical span at residues 405-423; the sequence is LFLLLFSIACFLGTILILF.

It belongs to the ligand-gated ion channel (TC 1.A.9) family. Acetylcholine receptor (TC 1.A.9.1) subfamily.

The protein resides in the postsynaptic cell membrane. It is found in the cell membrane. After binding acetylcholine, the AChR responds by an extensive change in conformation that affects all subunits and leads to opening of an ion-conducting channel across the plasma membrane. The chain is Acetylcholine receptor non-alpha chain from Onchocerca volvulus.